Reading from the N-terminus, the 58-residue chain is Transactivator protein ORF121 (58 aa).

In terms of biological role, stimulates the expression of 39k gene most probably by increasing IE1 expression. The chain is Transactivator protein ORF121 (AC121) from Lepidoptera (butterflies and moths).